We begin with the raw amino-acid sequence, 395 residues long: Homoserine O-acetyltransferase (395 aa).

The 299-residue stretch at 65–363 (PIVLIEHALT…SPTGHDGFLI (299 aa)) folds into the AB hydrolase-1 domain. The active-site Nucleophile is Ser-160. Residue Arg-230 coordinates substrate. Active-site residues include Asp-328 and His-358. Substrate is bound at residue Asp-359.

It belongs to the AB hydrolase superfamily. MetX family. In terms of assembly, homodimer.

It is found in the cytoplasm. The catalysed reaction is L-homoserine + acetyl-CoA = O-acetyl-L-homoserine + CoA. The protein operates within amino-acid biosynthesis; L-methionine biosynthesis via de novo pathway; O-acetyl-L-homoserine from L-homoserine: step 1/1. Its function is as follows. Transfers an acetyl group from acetyl-CoA to L-homoserine, forming acetyl-L-homoserine. The chain is Homoserine O-acetyltransferase from Corynebacterium jeikeium (strain K411).